The chain runs to 170 residues: NADH-quinone oxidoreductase subunit B (170 aa).

[4Fe-4S] cluster contacts are provided by cysteine 37, cysteine 38, cysteine 102, and cysteine 131.

The protein belongs to the complex I 20 kDa subunit family. As to quaternary structure, NDH-1 is composed of 14 different subunits. Subunits NuoB, C, D, E, F, and G constitute the peripheral sector of the complex. [4Fe-4S] cluster is required as a cofactor.

The protein localises to the cell inner membrane. It carries out the reaction a quinone + NADH + 5 H(+)(in) = a quinol + NAD(+) + 4 H(+)(out). Its function is as follows. NDH-1 shuttles electrons from NADH, via FMN and iron-sulfur (Fe-S) centers, to quinones in the respiratory chain. The immediate electron acceptor for the enzyme in this species is believed to be ubiquinone. Couples the redox reaction to proton translocation (for every two electrons transferred, four hydrogen ions are translocated across the cytoplasmic membrane), and thus conserves the redox energy in a proton gradient. This Geobacter sp. (strain M21) protein is NADH-quinone oxidoreductase subunit B.